The chain runs to 102 residues: Small ribosomal subunit protein uS10 (102 aa).

Belongs to the universal ribosomal protein uS10 family. In terms of assembly, part of the 30S ribosomal subunit.

Functionally, involved in the binding of tRNA to the ribosomes. The polypeptide is Small ribosomal subunit protein uS10 (Parafrankia sp. (strain EAN1pec)).